The following is a 206-amino-acid chain: MPSRRRTLLKVIILGDSGVGKTSLMNQYVNKKFSNQYKATIGADFLTKEVQFEDRLFTLQIWDTAGQERFQSLGVAFYRGADCCVLVYDVNSVKSFDNLNNWREEFLIQANPSDPENFPFVVIGNKIDIDGGNSRVVSEKKARAWCAAKGNIPYFETSAKEGINVEEAFQTIAKDALKSGEEEELYLPDTIDVGNSSQPRSTGCEC.

Residues 15-22 (GDSGVGKT), 63-67 (DTAGQ), and 125-128 (NKID) each bind GTP. Residues Cys-204 and Cys-206 are each lipidated (S-geranylgeranyl cysteine). The residue at position 206 (Cys-206) is a Cysteine methyl ester.

This sequence belongs to the small GTPase superfamily. Rab family.

It is found in the cell membrane. Functionally, protein transport. Probably involved in vesicular traffic. This Pisum sativum (Garden pea) protein is Ras-related protein Rab7.